The primary structure comprises 229 residues: UPF0758 protein CA_C1241 (229 aa).

Residues 107-229 (KITSPKEAAN…YISLKEEGLL (123 aa)) enclose the MPN domain. Positions 178, 180, and 191 each coordinate Zn(2+). The short motif at 178-191 (HNHPSGDPKPSNED) is the JAMM motif element.

The protein belongs to the UPF0758 family.

The sequence is that of UPF0758 protein CA_C1241 from Clostridium acetobutylicum (strain ATCC 824 / DSM 792 / JCM 1419 / IAM 19013 / LMG 5710 / NBRC 13948 / NRRL B-527 / VKM B-1787 / 2291 / W).